An 874-amino-acid chain; its full sequence is Envelope glycoprotein B (874 aa).

The first 25 residues, 1–25 (MGVGGGPRVVLCLWCVAALLCQGVA), serve as a signal peptide directing secretion. The Virion surface segment spans residues 26–727 (QEVVAETTTP…SGVISFFKNP (702 aa)). 5 cysteine pairs are disulfide-bonded: Cys-59-Cys-523, Cys-77-Cys-479, Cys-149-Cys-214, Cys-306-Cys-353, and Cys-546-Cys-583. The tract at residues 116 to 122 (IYKGWSE) is involved in fusion and/or binding to host membrane. N-linked (GlcNAc...) asparagine; by host glycosylation is present at Asn-171. Residues 200–208 (RNLLWSYTT) are involved in fusion and/or binding to host membrane. Residues Asn-247, Asn-281, Asn-302, Asn-323, Asn-348, Asn-356, Asn-376, Asn-409, Asn-412, Asn-444, Asn-558, Asn-610, and Asn-624 are each glycosylated (N-linked (GlcNAc...) asparagine; by host). The interval 412 to 450 (NATASPTSTPTTSPRRRRRDTSSVSGGGNNGDNSTKEES) is disordered. The segment at 673–725 (LDDSIDHGRDSFIQTLGDIMQDLGTIGKVVVNVASGVFSLFGSIVSGVISFFK) is hydrophobic membrane proximal region. Residues 728-748 (FGGMLLIVLIIAGVVVVYLFM) traverse the membrane as a helical segment. The Intravirion segment spans residues 749–874 (TRSRSIYSAP…VEAGTADTGV (126 aa)). The segment at 830–874 (RRGGGGYQRLQRDGSDDEGDYEPLRRQDGGYDDVDVEAGTADTGV) is disordered. Positions 836 to 839 (YQRL) match the Internalization motif motif.

It belongs to the herpesviridae glycoprotein B family. In terms of assembly, homotrimer; disulfide-linked. Binds to heparan sulfate proteoglycans. Interacts with gH/gL heterodimer. In terms of processing, a proteolytic cleavage by host furin generates two subunits that remain linked by disulfide bonds.

Its subcellular location is the virion membrane. It is found in the host cell membrane. The protein localises to the host endosome membrane. The protein resides in the host Golgi apparatus membrane. Functionally, envelope glycoprotein that forms spikes at the surface of virion envelope. Essential for the initial attachment to heparan sulfate moieties of the host cell surface proteoglycans. Involved in fusion of viral and cellular membranes leading to virus entry into the host cell. Following initial binding to its host receptors, membrane fusion is mediated by the fusion machinery composed at least of gB and the heterodimer gH/gL. May be involved in the fusion between the virion envelope and the outer nuclear membrane during virion egress. This is Envelope glycoprotein B from Equus caballus (Horse).